A 681-amino-acid chain; its full sequence is Propionyl-CoA carboxylase alpha chain (681 aa).

The Biotin carboxylation domain maps to 1–466 (MFNKILIANR…TTAFIAEEYP (466 aa)). ATP-binding positions include Lys-116, 148–209 (SNQI…PRHI), Glu-200, and Asn-235. In terms of domain architecture, ATP-grasp spans 120 to 317 (KKIAQEANVS…LVEQMIRVAA (198 aa)). Residues Glu-275, Glu-288, and Asn-290 each contribute to the Mg(2+) site. 3 residues coordinate Mn(2+): Glu-275, Glu-288, and Asn-290. Residue Glu-288 is part of the active site. Phe-348 provides a ligand contact to biotin. One can recognise a Biotinyl-binding domain in the interval 602–681 (LMPEKLPPDT…AVDDVIMEFE (80 aa)). At Lys-647 the chain carries N6-biotinyllysine.

As to quaternary structure, the holoenzyme is a dodecamer composed of 6 PccA/alpha subunits and 6 PccB/beta subunits. The cofactor is Mg(2+). Requires Mn(2+) as cofactor. Biotin serves as cofactor. Post-translationally, the biotin cofactor is covalently attached to the C-terminal biotinyl-binding domain and is required for the catalytic activity.

It catalyses the reaction propanoyl-CoA + hydrogencarbonate + ATP = (S)-methylmalonyl-CoA + ADP + phosphate + H(+). It participates in metabolic intermediate metabolism; propanoyl-CoA degradation; succinyl-CoA from propanoyl-CoA: step 1/3. In terms of biological role, this is one of the 2 subunits of the biotin-dependent propionyl-CoA carboxylase (PCC), the enzyme catalyzing the carboxylation of propionyl-CoA/propanoyl-CoA to D-methylmalonyl-CoA/(S)-methylmalonyl-CoA. Within the holoenzyme, the alpha subunit catalyzes the ATP-dependent carboxylation of the biotin carried by the biotin carboxyl carrier (BCC) domain, while the beta subunit then tranfers the carboxyl group from carboxylated biotin to propionyl-CoA. The chain is Propionyl-CoA carboxylase alpha chain from Ruegeria pomeroyi (strain ATCC 700808 / DSM 15171 / DSS-3) (Silicibacter pomeroyi).